The chain runs to 565 residues: DNA mismatch repair protein MutL (565 aa).

The protein belongs to the DNA mismatch repair MutL/HexB family.

Its function is as follows. This protein is involved in the repair of mismatches in DNA. It is required for dam-dependent methyl-directed DNA mismatch repair. May act as a 'molecular matchmaker', a protein that promotes the formation of a stable complex between two or more DNA-binding proteins in an ATP-dependent manner without itself being part of a final effector complex. The sequence is that of DNA mismatch repair protein MutL from Desulforudis audaxviator (strain MP104C).